The following is a 116-amino-acid chain: Putative pterin-4-alpha-carbinolamine dehydratase (116 aa).

It belongs to the pterin-4-alpha-carbinolamine dehydratase family.

The enzyme catalyses (4aS,6R)-4a-hydroxy-L-erythro-5,6,7,8-tetrahydrobiopterin = (6R)-L-erythro-6,7-dihydrobiopterin + H2O. The sequence is that of Putative pterin-4-alpha-carbinolamine dehydratase from Xylella fastidiosa (strain M23).